Reading from the N-terminus, the 876-residue chain is Alanine--tRNA ligase (876 aa).

Lys74 carries the N6-acetyllysine modification. Zn(2+) is bound by residues His564, His568, Cys666, and His670.

It belongs to the class-II aminoacyl-tRNA synthetase family. In terms of assembly, homotetramer. Zn(2+) serves as cofactor.

The protein localises to the cytoplasm. It carries out the reaction tRNA(Ala) + L-alanine + ATP = L-alanyl-tRNA(Ala) + AMP + diphosphate. In terms of biological role, catalyzes the attachment of alanine to tRNA(Ala) in a two-step reaction: alanine is first activated by ATP to form Ala-AMP and then transferred to the acceptor end of tRNA(Ala). Also edits incorrectly charged Ser-tRNA(Ala) and Gly-tRNA(Ala) via its editing domain. The sequence is that of Alanine--tRNA ligase from Escherichia coli O9:H4 (strain HS).